The chain runs to 545 residues: DNA-binding protein REPIN1 (545 aa).

Residues 1–50 are disordered; that stretch reads MLEQRCRGPTAMGPAQPWLFSGPSQESSQPDRGLRYQGKSAQPRGQTPGK. Position 27 is a phosphoserine (Ser27). N6-acetyllysine is present on Lys39. A C2H2-type 1; atypical zinc finger spans residues 52–74; it reads HRCAHCRKRFPGWVALWLHARRC. 2 consecutive C2H2-type zinc fingers follow at residues 80–102 and 111–133; these read LPCH…LQVH and FICH…LRAH. Residues 140 to 162 form a C2H2-type 4; atypical zinc finger; the sequence is ITCPECDRRFWRQKQLRAHLRRC. C2H2-type zinc fingers lie at residues 172-194, 229-251, 257-279, 285-307, 353-375, 381-403, 409-431, 437-459, 465-487, 493-515, and 521-543; these read FICG…KRVH, FQCA…RRVH, HQCP…RRIH, YPCT…SKIH, HSCS…QRQH, FACT…SRVH, FACE…RRDH, FVCP…RRIH, YVCP…RRIH, YACP…RKSH, and FCCA…QKKH. The residue at position 269 (Lys269) is an N6-acetyllysine.

In terms of assembly, homodimers and homomultimers. Found in a complex with RIP60 and RIP100.

The protein localises to the nucleus. It localises to the cytoplasm. The protein resides in the cytosol. Sequence-specific double-stranded DNA-binding protein. Binds ATT-rich and T-rich DNA sequences and facilitates DNA bending. May regulate the expression of genes involved in cellular fatty acid import, including SCARB1/CD36, and genes involved in lipid droplet formation. May regulate the expression of LCN2, and thereby influence iron metabolism and apoptosis-related pathways. May regulate the expression of genes involved in glucose transport. The protein is DNA-binding protein REPIN1 (Repin1) of Mus musculus (Mouse).